A 286-amino-acid polypeptide reads, in one-letter code: Bifunctional protein FolD (286 aa).

NADP(+) is bound by residues 164–166 (GTS) and Ile-230.

The protein belongs to the tetrahydrofolate dehydrogenase/cyclohydrolase family. As to quaternary structure, homodimer.

The enzyme catalyses (6R)-5,10-methylene-5,6,7,8-tetrahydrofolate + NADP(+) = (6R)-5,10-methenyltetrahydrofolate + NADPH. It catalyses the reaction (6R)-5,10-methenyltetrahydrofolate + H2O = (6R)-10-formyltetrahydrofolate + H(+). The protein operates within one-carbon metabolism; tetrahydrofolate interconversion. Its function is as follows. Catalyzes the oxidation of 5,10-methylenetetrahydrofolate to 5,10-methenyltetrahydrofolate and then the hydrolysis of 5,10-methenyltetrahydrofolate to 10-formyltetrahydrofolate. This Mesoplasma florum (strain ATCC 33453 / NBRC 100688 / NCTC 11704 / L1) (Acholeplasma florum) protein is Bifunctional protein FolD.